Consider the following 121-residue polypeptide: Large ribosomal subunit protein bL12 (121 aa).

Belongs to the bacterial ribosomal protein bL12 family. In terms of assembly, homodimer. Part of the ribosomal stalk of the 50S ribosomal subunit. Forms a multimeric L10(L12)X complex, where L10 forms an elongated spine to which 2 to 4 L12 dimers bind in a sequential fashion. Binds GTP-bound translation factors.

Forms part of the ribosomal stalk which helps the ribosome interact with GTP-bound translation factors. Is thus essential for accurate translation. In Streptococcus suis (strain 98HAH33), this protein is Large ribosomal subunit protein bL12.